The primary structure comprises 157 residues: Ribosomal RNA large subunit methyltransferase H (157 aa).

Residues glycine 104 and 123–128 contribute to the S-adenosyl-L-methionine site; that span reads LSSLTL.

Belongs to the RNA methyltransferase RlmH family. As to quaternary structure, homodimer.

The protein resides in the cytoplasm. The enzyme catalyses pseudouridine(1915) in 23S rRNA + S-adenosyl-L-methionine = N(3)-methylpseudouridine(1915) in 23S rRNA + S-adenosyl-L-homocysteine + H(+). Its function is as follows. Specifically methylates the pseudouridine at position 1915 (m3Psi1915) in 23S rRNA. The polypeptide is Ribosomal RNA large subunit methyltransferase H (Nitrosococcus oceani (strain ATCC 19707 / BCRC 17464 / JCM 30415 / NCIMB 11848 / C-107)).